The following is a 614-amino-acid chain: Serine/threonine-protein kinase-like protein E (614 aa).

One can recognise a Protein kinase domain in the interval 15-404 (YLIQLHLGQN…NPNTNGAPLS (390 aa)). ATP is bound at residue 21–29 (LGQNSLGQQ). The span at 256 to 269 (PEQTDNGVGKSSTG) shows a compositional bias: polar residues. A disordered region spans residues 256–284 (PEQTDNGVGKSSTGEPPFPTVHQSPESSS).

It belongs to the protein kinase superfamily. Ser/Thr protein kinase family.

Lacks protein kinase activity. This is Serine/threonine-protein kinase-like protein E (spkE) from Synechocystis sp. (strain ATCC 27184 / PCC 6803 / Kazusa).